A 226-amino-acid chain; its full sequence is Ribonuclease 3 (226 aa).

Residues 6–128 (INRLQRKLGY…LIGGVFLDSD (123 aa)) form the RNase III domain. Glutamate 41 is a binding site for Mg(2+). The active site involves aspartate 45. Residues aspartate 114 and glutamate 117 each coordinate Mg(2+). The active site involves glutamate 117. Residues 155-225 (DPKTRLQEFL…AEQALIKLEL (71 aa)) form the DRBM domain.

Belongs to the ribonuclease III family. In terms of assembly, homodimer. Mg(2+) serves as cofactor.

It is found in the cytoplasm. It catalyses the reaction Endonucleolytic cleavage to 5'-phosphomonoester.. Digests double-stranded RNA. Involved in the processing of primary rRNA transcript to yield the immediate precursors to the large and small rRNAs (23S and 16S). Processes some mRNAs, and tRNAs when they are encoded in the rRNA operon. Processes pre-crRNA and tracrRNA of type II CRISPR loci if present in the organism. This chain is Ribonuclease 3, found in Serratia proteamaculans (strain 568).